A 304-amino-acid polypeptide reads, in one-letter code: tRNA pseudouridine synthase B (304 aa).

The active-site Nucleophile is the Asp-38.

Belongs to the pseudouridine synthase TruB family. Type 1 subfamily.

The catalysed reaction is uridine(55) in tRNA = pseudouridine(55) in tRNA. Its function is as follows. Responsible for synthesis of pseudouridine from uracil-55 in the psi GC loop of transfer RNAs. The chain is tRNA pseudouridine synthase B from Listeria welshimeri serovar 6b (strain ATCC 35897 / DSM 20650 / CCUG 15529 / CIP 8149 / NCTC 11857 / SLCC 5334 / V8).